The primary structure comprises 187 residues: Large ribosomal subunit protein uL5 (187 aa).

It belongs to the universal ribosomal protein uL5 family. Part of the 50S ribosomal subunit; part of the 5S rRNA/L5/L18/L25 subcomplex. Contacts the 5S rRNA and the P site tRNA. Forms a bridge to the 30S subunit in the 70S ribosome.

Functionally, this is one of the proteins that bind and probably mediate the attachment of the 5S RNA into the large ribosomal subunit, where it forms part of the central protuberance. In the 70S ribosome it contacts protein S13 of the 30S subunit (bridge B1b), connecting the 2 subunits; this bridge is implicated in subunit movement. Contacts the P site tRNA; the 5S rRNA and some of its associated proteins might help stabilize positioning of ribosome-bound tRNAs. This is Large ribosomal subunit protein uL5 from Gluconobacter oxydans (strain 621H) (Gluconobacter suboxydans).